Reading from the N-terminus, the 321-residue chain is MTPAQLRAYSAVVRLGSVRAAAAELGLSDAGVSMHVAALRKELDDPLFTRTGAGLAFTPGGLRLASRAVEILGLQQQTAIEVTEAAHGRRLLRIAASSAFAEHAAPGLIELFSSRADDLSVELSVHPTSRFRELICSRAVDIAIGPASESSIGSDGSIFLRPFLKYQIITVVAPNSPLAAGIPMPALLRHQQWMLGPSAGSVDGEIATMLRGLAIPESQQRIFQSDAAALEEVMRVGGATLAIGFAVAKDLAAGRLVHVTGPGLDRAGEWCVATLAPSARQPAVSELVGFISTPRCIQAMIPGSGVGVTRFRPKVHVTLWS.

The HTH lysR-type domain maps to 1–58 (MTPAQLRAYSAVVRLGSVRAAAAELGLSDAGVSMHVAALRKELDDPLFTRTGAGLAFT). The H-T-H motif DNA-binding region spans 18–37 (VRAAAAELGLSDAGVSMHVA).

The protein belongs to the LysR transcriptional regulatory family.

This is an uncharacterized protein from Mycobacterium tuberculosis (strain CDC 1551 / Oshkosh).